The chain runs to 115 residues: MDTWLVCWAIFSLLKAGLTEPEVTQTPSHQVTQMGQEVILRCVPISNHLYFYWYRQILGQKVEFLVSFYNNEISEKSEIFDDQFSVERPDGSNFTLKIRSTKLEDSAMYFCASSE.

A signal peptide spans 1-19 (MDTWLVCWAIFSLLKAGLT). Residues 21 to 115 (PEVTQTPSHQ…SAMYFCASSE (95 aa)) form the Ig-like domain. Cys42 and Cys111 are joined by a disulfide. Asn93 carries an N-linked (GlcNAc...) asparagine glycan.

In terms of assembly, alpha-beta TR is a heterodimer composed of an alpha and beta chain; disulfide-linked. The alpha-beta TR is associated with the transmembrane signaling CD3 coreceptor proteins to form the TR-CD3 (TcR or TCR). The assembly of alpha-beta TR heterodimers with CD3 occurs in the endoplasmic reticulum where a single alpha-beta TR heterodimer associates with one CD3D-CD3E heterodimer, one CD3G-CD3E heterodimer and one CD247 homodimer forming a stable octameric structure. CD3D-CD3E and CD3G-CD3E heterodimers preferentially associate with TR alpha and TR beta chains, respectively. The association of the CD247 homodimer is the last step of TcR assembly in the endoplasmic reticulum and is required for transport to the cell surface.

It localises to the cell membrane. Functionally, v region of the variable domain of T cell receptor (TR) beta chain that participates in the antigen recognition. Alpha-beta T cell receptors are antigen specific receptors which are essential to the immune response and are present on the cell surface of T lymphocytes. Recognize peptide-major histocompatibility (MH) (pMH) complexes that are displayed by antigen presenting cells (APC), a prerequisite for efficient T cell adaptive immunity against pathogens. Binding of alpha-beta TR to pMH complex initiates TR-CD3 clustering on the cell surface and intracellular activation of LCK that phosphorylates the ITAM motifs of CD3G, CD3D, CD3E and CD247 enabling the recruitment of ZAP70. In turn ZAP70 phosphorylates LAT, which recruits numerous signaling molecules to form the LAT signalosome. The LAT signalosome propagates signal branching to three major signaling pathways, the calcium, the mitogen-activated protein kinase (MAPK) kinase and the nuclear factor NF-kappa-B (NF-kB) pathways, leading to the mobilization of transcription factors that are critical for gene expression and essential for T cell growth and differentiation. The T cell repertoire is generated in the thymus, by V-(D)-J rearrangement. This repertoire is then shaped by intrathymic selection events to generate a peripheral T cell pool of self-MH restricted, non-autoaggressive T cells. Post-thymic interaction of alpha-beta TR with the pMH complexes shapes TR structural and functional avidity. The sequence is that of T cell receptor beta variable 2 from Homo sapiens (Human).